The chain runs to 313 residues: Ribosomal RNA small subunit methyltransferase H (313 aa).

S-adenosyl-L-methionine contacts are provided by residues 33-35, D53, F80, D101, and Q108; that span reads GGH. A disordered region spans residues 282 to 313; sequence LVHNKPLTPSEAEIEQNPRARSAKLRVAQKLA.

It belongs to the methyltransferase superfamily. RsmH family.

It localises to the cytoplasm. It catalyses the reaction cytidine(1402) in 16S rRNA + S-adenosyl-L-methionine = N(4)-methylcytidine(1402) in 16S rRNA + S-adenosyl-L-homocysteine + H(+). Functionally, specifically methylates the N4 position of cytidine in position 1402 (C1402) of 16S rRNA. This is Ribosomal RNA small subunit methyltransferase H from Magnetococcus marinus (strain ATCC BAA-1437 / JCM 17883 / MC-1).